Here is a 260-residue protein sequence, read N- to C-terminus: Ubiquinone/menaquinone biosynthesis C-methyltransferase UbiE (260 aa).

S-adenosyl-L-methionine-binding positions include Thr83, Asp104, and 132-133 (NA).

This sequence belongs to the class I-like SAM-binding methyltransferase superfamily. MenG/UbiE family.

The enzyme catalyses a 2-demethylmenaquinol + S-adenosyl-L-methionine = a menaquinol + S-adenosyl-L-homocysteine + H(+). It catalyses the reaction a 2-methoxy-6-(all-trans-polyprenyl)benzene-1,4-diol + S-adenosyl-L-methionine = a 5-methoxy-2-methyl-3-(all-trans-polyprenyl)benzene-1,4-diol + S-adenosyl-L-homocysteine + H(+). It participates in quinol/quinone metabolism; menaquinone biosynthesis; menaquinol from 1,4-dihydroxy-2-naphthoate: step 2/2. It functions in the pathway cofactor biosynthesis; ubiquinone biosynthesis. In terms of biological role, methyltransferase required for the conversion of demethylmenaquinol (DMKH2) to menaquinol (MKH2) and the conversion of 2-polyprenyl-6-methoxy-1,4-benzoquinol (DDMQH2) to 2-polyprenyl-3-methyl-6-methoxy-1,4-benzoquinol (DMQH2). The protein is Ubiquinone/menaquinone biosynthesis C-methyltransferase UbiE of Bartonella henselae (strain ATCC 49882 / DSM 28221 / CCUG 30454 / Houston 1) (Rochalimaea henselae).